The sequence spans 100 residues: uncharacterized protein (100 aa).

The disordered stretch occupies residues 78–100 (NNGNLDFKGRADERRQPVSNLRM). Residues 84-93 (FKGRADERRQ) show a composition bias toward basic and acidic residues.

This is an uncharacterized protein from Saccharomyces cerevisiae (strain ATCC 204508 / S288c) (Baker's yeast).